The sequence spans 405 residues: 1-deoxy-D-xylulose 5-phosphate reductoisomerase (405 aa).

Thr-16, Gly-17, Ser-18, Ile-19, Gly-42, Arg-43, Asn-44, and Asn-130 together coordinate NADPH. Lys-131 is a 1-deoxy-D-xylulose 5-phosphate binding site. An NADPH-binding site is contributed by Glu-132. Asp-156 contacts Mn(2+). 4 residues coordinate 1-deoxy-D-xylulose 5-phosphate: Ser-157, Glu-158, Ser-192, and His-215. Glu-158 contributes to the Mn(2+) binding site. Residue Gly-221 participates in NADPH binding. Residues Ser-228, Asn-233, Lys-234, and Glu-237 each coordinate 1-deoxy-D-xylulose 5-phosphate. Glu-237 contributes to the Mn(2+) binding site.

This sequence belongs to the DXR family. It depends on Mg(2+) as a cofactor. Mn(2+) is required as a cofactor.

It carries out the reaction 2-C-methyl-D-erythritol 4-phosphate + NADP(+) = 1-deoxy-D-xylulose 5-phosphate + NADPH + H(+). It functions in the pathway isoprenoid biosynthesis; isopentenyl diphosphate biosynthesis via DXP pathway; isopentenyl diphosphate from 1-deoxy-D-xylulose 5-phosphate: step 1/6. Its function is as follows. Catalyzes the NADPH-dependent rearrangement and reduction of 1-deoxy-D-xylulose-5-phosphate (DXP) to 2-C-methyl-D-erythritol 4-phosphate (MEP). The polypeptide is 1-deoxy-D-xylulose 5-phosphate reductoisomerase (Pasteurella multocida (strain Pm70)).